A 391-amino-acid polypeptide reads, in one-letter code: Carbamoyl phosphate synthase small chain (391 aa).

The tract at residues 1–189 (MIKSALLVLE…DLPAAKQPED (189 aa)) is CPSase. 3 residues coordinate L-glutamine: Ser47, Gly241, and Gly243. Residues 193 to 380 (HVVAYDYGVK…IELIEAYRAS (188 aa)) form the Glutamine amidotransferase type-1 domain. Residue Cys269 is the Nucleophile of the active site. Leu270, Gln273, Asn311, Gly313, and Phe314 together coordinate L-glutamine. Residues His353 and Glu355 contribute to the active site.

This sequence belongs to the CarA family. In terms of assembly, composed of two chains; the small (or glutamine) chain promotes the hydrolysis of glutamine to ammonia, which is used by the large (or ammonia) chain to synthesize carbamoyl phosphate. Tetramer of heterodimers (alpha,beta)4.

The catalysed reaction is hydrogencarbonate + L-glutamine + 2 ATP + H2O = carbamoyl phosphate + L-glutamate + 2 ADP + phosphate + 2 H(+). It catalyses the reaction L-glutamine + H2O = L-glutamate + NH4(+). Its pathway is amino-acid biosynthesis; L-arginine biosynthesis; carbamoyl phosphate from bicarbonate: step 1/1. It functions in the pathway pyrimidine metabolism; UMP biosynthesis via de novo pathway; (S)-dihydroorotate from bicarbonate: step 1/3. Its function is as follows. Small subunit of the glutamine-dependent carbamoyl phosphate synthetase (CPSase). CPSase catalyzes the formation of carbamoyl phosphate from the ammonia moiety of glutamine, carbonate, and phosphate donated by ATP, constituting the first step of 2 biosynthetic pathways, one leading to arginine and/or urea and the other to pyrimidine nucleotides. The small subunit (glutamine amidotransferase) binds and cleaves glutamine to supply the large subunit with the substrate ammonia. The chain is Carbamoyl phosphate synthase small chain from Yersinia pestis.